A 452-amino-acid chain; its full sequence is Low-affinity putrescine importer PlaP (452 aa).

The Cytoplasmic portion of the chain corresponds to Met1 to Lys16. A helical membrane pass occupies residues Thr17–Phe37. Topologically, residues Asp38–Asp48 are periplasmic. The chain crosses the membrane as a helical span at residues Gly49–Tyr69. Residues Gly70–Gly95 lie on the Cytoplasmic side of the membrane. A helical transmembrane segment spans residues Phe96–Leu116. Over Ala117 to Ala123 the chain is Periplasmic. Residues Leu124–Phe144 traverse the membrane as a helical segment. Topologically, residues Asn145–Val158 are cytoplasmic. Residues Ile159–Phe179 form a helical membrane-spanning segment. Residues Glu180–His199 lie on the Periplasmic side of the membrane. Residues Val200–Ile220 traverse the membrane as a helical segment. The Cytoplasmic segment spans residues Ser221 to Ala237. The chain crosses the membrane as a helical span at residues Ile238 to Leu258. Over Tyr259–Lys283 the chain is Periplasmic. Residues Ala284 to Ala304 traverse the membrane as a helical segment. The Cytoplasmic portion of the chain corresponds to His305–Asn339. Transmembrane regions (helical) follow at residues Ile340–Ala360 and Leu361–Phe381. Topologically, residues Trp382–His394 are cytoplasmic. The chain crosses the membrane as a helical span at residues Phe395 to Leu415. At Glu416 to Glu417 the chain is on the periplasmic side. Residues Ser418–Thr438 form a helical membrane-spanning segment. At Lys439 to Ala452 the chain is on the cytoplasmic side.

Belongs to the amino acid-polyamine-organocation (APC) superfamily.

It localises to the cell inner membrane. It carries out the reaction putrescine(in) + H(+)(in) = putrescine(out) + H(+)(out). Its function is as follows. Putrescine importer. In Escherichia coli O157:H7, this protein is Low-affinity putrescine importer PlaP (plaP).